Consider the following 167-residue polypeptide: Acetolactate synthase small subunit (167 aa).

Residues 7-81 (TLSVLVEAKP…NVIKIVELED (75 aa)) form the ACT domain.

This sequence belongs to the acetolactate synthase small subunit family. As to quaternary structure, dimer of large and small chains.

The enzyme catalyses 2 pyruvate + H(+) = (2S)-2-acetolactate + CO2. It participates in amino-acid biosynthesis; L-isoleucine biosynthesis; L-isoleucine from 2-oxobutanoate: step 1/4. The protein operates within amino-acid biosynthesis; L-valine biosynthesis; L-valine from pyruvate: step 1/4. This chain is Acetolactate synthase small subunit (ilvH), found in Mycobacterium avium.